Reading from the N-terminus, the 255-residue chain is Ribosomal RNA small subunit methyltransferase A (255 aa).

The S-adenosyl-L-methionine site is built by Asn-12, Leu-14, Gly-39, Glu-60, Asp-84, and Asn-102.

Belongs to the class I-like SAM-binding methyltransferase superfamily. rRNA adenine N(6)-methyltransferase family. RsmA subfamily.

It localises to the cytoplasm. The enzyme catalyses adenosine(1518)/adenosine(1519) in 16S rRNA + 4 S-adenosyl-L-methionine = N(6)-dimethyladenosine(1518)/N(6)-dimethyladenosine(1519) in 16S rRNA + 4 S-adenosyl-L-homocysteine + 4 H(+). Its function is as follows. Specifically dimethylates two adjacent adenosines (A1518 and A1519) in the loop of a conserved hairpin near the 3'-end of 16S rRNA in the 30S particle. May play a critical role in biogenesis of 30S subunits. The protein is Ribosomal RNA small subunit methyltransferase A of Methylobacillus flagellatus (strain ATCC 51484 / DSM 6875 / VKM B-1610 / KT).